The chain runs to 240 residues: tRNA (guanine-N(1)-)-methyltransferase (240 aa).

Residues Gly-110 and 129 to 134 contribute to the S-adenosyl-L-methionine site; that span reads LGDFVL.

It belongs to the RNA methyltransferase TrmD family. Homodimer.

It localises to the cytoplasm. It carries out the reaction guanosine(37) in tRNA + S-adenosyl-L-methionine = N(1)-methylguanosine(37) in tRNA + S-adenosyl-L-homocysteine + H(+). In terms of biological role, specifically methylates guanosine-37 in various tRNAs. In Clostridium botulinum (strain ATCC 19397 / Type A), this protein is tRNA (guanine-N(1)-)-methyltransferase.